A 738-amino-acid chain; its full sequence is Adhesion G protein-coupled receptor L4 (738 aa).

An N-terminal signal peptide occupies residues 1 to 19; the sequence is MRLLLLLVGLSTLLNHSYT. The EGF-like 1 domain maps to 20–56; that stretch reads QNCKTPCLPNAKCEVLDEVAACFCSTGYTGNGITICE. Over 20–480 the chain is Extracellular; it reads QNCKTPCLPN…DYNILTRITQ (461 aa). Disulfide bonds link C22–C32, C26–C41, C43–C55, C61–C73, C67–C82, C84–C105, C111–C123, C117–C132, and C134–C155. Positions 57–106 constitute an EGF-like 2; calcium-binding domain; sequence DVDECNETSVCGDHAVCENTNGGFSCFCVEGYQTSTGKTQFTPNDGSYCQ. Residue N62 is glycosylated (N-linked (GlcNAc...) asparagine). The 50-residue stretch at 107–156 folds into the EGF-like 3; calcium-binding domain; sequence DVDECNETSVCGDHAVCENTNGGFSCFCVEGYQTSTGKTQFTPNDGSYCQ. N112 carries N-linked (GlcNAc...) asparagine glycosylation. N-linked (GlcNAc...) asparagine glycans are attached at residues N175, N226, N297, N421, N429, and N443. The 176-residue stretch at 292–467 folds into the GAIN-B domain; it reads TQFDMNSTDL…AILMSPSTSI (176 aa). 2 disulfides stabilise this stretch: C417-C449 and C437-C451. The GPS stretch occupies residues 417–467; the sequence is CAFWNYSVDDMNNGSWSSEGCELTYSNDTHTSCRCSHLTHFAILMSPSTSI. Residues 481 to 501 traverse the membrane as a helical segment; that stretch reads LGIIISLICLAICIFTFWFFS. Residues 502–522 are Cytoplasmic-facing; the sequence is EIQSTRTTIHKNLCCSLFLAQ. Residues 523 to 543 traverse the membrane as a helical segment; it reads LVFLVGININTNKLVCSIIAG. The Extracellular segment spans residues 544-547; it reads LLHY. The chain crosses the membrane as a helical span at residues 548–568; the sequence is FFLAAFAWMCIEGIYLYLIVV. The Cytoplasmic portion of the chain corresponds to 569–580; it reads GLIYNKGFLHKN. A helical membrane pass occupies residues 581-601; sequence FYIFGYLSPAVVVGFSASLGY. At 602–621 the chain is on the extracellular side; it reads RYYGTTKVCWLSTENNFIWS. The chain crosses the membrane as a helical span at residues 622–642; that stretch reads FIGPACLIILVNLLAFGVIIY. The Cytoplasmic portion of the chain corresponds to 643-666; it reads KVFRHTAGLKPEVSCYENIRSCAR. A helical membrane pass occupies residues 667–687; it reads GALALLFLLGTTWTFGVLHVV. Residues 688 to 694 are Extracellular-facing; sequence HASVVTA. A helical transmembrane segment spans residues 695–715; sequence YLFTVSNAFQGMFIFLFLCVL. At 716–738 the chain is on the cytoplasmic side; that stretch reads SRKIQEEYYRLFKNVPCCFECLR.

The protein belongs to the G-protein coupled receptor 2 family. Adhesion G-protein coupled receptor (ADGR) subfamily. Heterodimer of 2 chains generated by proteolytic processing; the large extracellular N-terminal fragment and the membrane-bound C-terminal fragment predominantly remain associated and non-covalently linked. Post-translationally, proteolytically cleaved into 2 subunits, an extracellular alpha subunit and a seven-transmembrane subunit. Glycosylated. In terms of tissue distribution, abundantly expressed in heart, lung, and kidney. Less evident expression is observed in brain, skeletal muscle, liver and spleen. No expression is detected in testis.

It localises to the cell membrane. In terms of biological role, endothelial orphan receptor that acts as a key regulator of angiogenesis. This Rattus norvegicus (Rat) protein is Adhesion G protein-coupled receptor L4 (Adgrl4).